Reading from the N-terminus, the 494-residue chain is Bifunctional pantoate ligase/cytidylate kinase (494 aa).

The tract at residues 1–258 (MHFVPTMGGL…CGSTRLIDHA (258 aa)) is pantoate--beta-alanine ligase. 7–14 (MGGLHHGH) contacts ATP. H14 acts as the Proton donor in catalysis. Q41 serves as a coordination point for (R)-pantoate. Q41 serves as a coordination point for beta-alanine. 130–133 (GEKD) lines the ATP pocket. Q136 lines the (R)-pantoate pocket. Residues V159 and 167 to 170 (SSSR) each bind ATP. The segment at 259 to 494 (FLMTRSPLVA…VGEEVWPTPV (236 aa)) is cytidylate kinase.

In the N-terminal section; belongs to the pantothenate synthetase family. It in the C-terminal section; belongs to the cytidylate kinase family. Type 1 subfamily.

It localises to the cytoplasm. The catalysed reaction is (R)-pantoate + beta-alanine + ATP = (R)-pantothenate + AMP + diphosphate + H(+). It carries out the reaction CMP + ATP = CDP + ADP. The enzyme catalyses dCMP + ATP = dCDP + ADP. The protein operates within cofactor biosynthesis; (R)-pantothenate biosynthesis; (R)-pantothenate from (R)-pantoate and beta-alanine: step 1/1. Catalyzes the condensation of pantoate with beta-alanine in an ATP-dependent reaction via a pantoyl-adenylate intermediate. In terms of biological role, catalyzes the transfer of a phosphate group from ATP to either CMP or dCMP to form CDP or dCDP and ADP, respectively. This chain is Bifunctional pantoate ligase/cytidylate kinase, found in Synechococcus sp. (strain CC9311).